The primary structure comprises 224 residues: Vesicle transport through interaction with t-SNAREs homolog 1A (224 aa).

Topologically, residues 1–199 (MSADFEGYEQ…GMLRRIIQNR (199 aa)) are cytoplasmic. 2 coiled-coil regions span residues 31 to 92 (PDEK…KRSR) and 106 to 185 (DAGN…GKSS). A helical; Anchor for type IV membrane protein membrane pass occupies residues 200-220 (ILLVILGIIVVITILTAITFF). At 221-224 (VRGH) the chain is on the vesicular side.

Belongs to the VTI1 family. In terms of assembly, interacts with distinct SNARE complexes that contain either STX5 or STX6. Interacts with NAPA and, to a lesser extent, with NAPG. Identified in a complex containing STX6, STX12, VAMP4 and VTI1A. As to expression, specifically expressed in the neuronal tissues cerebellum, cortex and hippocampus. Isoform 1/VTI1A is expressed in the same neuronal tissues but also in lung, liver, kidney and spleen.

Its subcellular location is the membrane. The protein resides in the cytoplasmic vesicle. The protein localises to the secretory vesicle. It localises to the synaptic vesicle membrane. It is found in the clathrin-coated vesicle membrane. Its subcellular location is the golgi apparatus membrane. In terms of biological role, V-SNARE that mediates vesicle transport pathways through interactions with t-SNAREs on the target membrane. These interactions are proposed to mediate aspects of the specificity of vesicle trafficking and to promote fusion of the lipid bilayers. Involved in vesicular transport from the late endosomes to the trans-Golgi network. Along with VAMP7, involved in an non-conventional RAB1-dependent traffic route to the cell surface used by KCNIP1 and KCND2. May be concerned with increased secretion of cytokines associated with cellular senescence. This is Vesicle transport through interaction with t-SNAREs homolog 1A (Vti1a) from Rattus norvegicus (Rat).